Reading from the N-terminus, the 736-residue chain is Centrosomal protein kizuna (736 aa).

The stretch at histidine 10–glutamine 35 forms a coiled coil. Positions asparagine 192–serine 208 are enriched in polar residues. Disordered stretches follow at residues asparagine 192–leucine 238, serine 279–serine 305, glutamate 323–proline 348, and threonine 642–threonine 690. The segment covering glutamate 210–isoleucine 219 has biased composition (basic and acidic residues). Residues leucine 328 to serine 339 show a composition bias toward polar residues. A compositionally biased stretch (low complexity) spans serine 658–serine 668. A compositionally biased stretch (polar residues) spans isoleucine 678–threonine 690.

This sequence belongs to the kizuna family.

It localises to the cytoplasm. Its subcellular location is the cytoskeleton. The protein localises to the microtubule organizing center. It is found in the centrosome. The protein resides in the cilium basal body. In terms of biological role, centrosomal protein required for establishing a robust mitotic centrosome architecture that can endure the forces that converge on the centrosomes during spindle formation. Required for stabilizing the expanded pericentriolar material around the centriole. In Xenopus laevis (African clawed frog), this protein is Centrosomal protein kizuna (kiz).